A 152-amino-acid chain; its full sequence is Transcriptional repressor NrdR (152 aa).

A zinc finger lies at 3 to 33; that stretch reads CSICKKGETSVVDSRPTEDGTAIRRRRLCVC. The 91-residue stretch at 48–138 folds into the ATP-cone domain; that stretch reads IMVVKKNGRK…VYRNFREEKD (91 aa).

The protein belongs to the NrdR family. Requires Zn(2+) as cofactor.

Its function is as follows. Negatively regulates transcription of bacterial ribonucleotide reductase nrd genes and operons by binding to NrdR-boxes. The chain is Transcriptional repressor NrdR from Pelagibacter ubique (strain HTCC1062).